We begin with the raw amino-acid sequence, 709 residues long: Polyribonucleotide nucleotidyltransferase (709 aa).

D485 and D491 together coordinate Mg(2+). In terms of domain architecture, KH spans 552 to 611 (PRIYTMKIDPKKIKDVIGKGGATIRSLTEETGTSIDIDDDGTVKIAAVDSNAAKNVMGRI). Positions 621 to 689 (GAIYKGKVTR…RQGRIRLTMK (69 aa)) constitute an S1 motif domain.

The protein belongs to the polyribonucleotide nucleotidyltransferase family. Component of the RNA degradosome, which is a multiprotein complex involved in RNA processing and mRNA degradation. Requires Mg(2+) as cofactor.

It localises to the cytoplasm. It catalyses the reaction RNA(n+1) + phosphate = RNA(n) + a ribonucleoside 5'-diphosphate. Involved in mRNA degradation. Catalyzes the phosphorolysis of single-stranded polyribonucleotides processively in the 3'- to 5'-direction. The polypeptide is Polyribonucleotide nucleotidyltransferase (Haemophilus influenzae (strain PittEE)).